Consider the following 108-residue polypeptide: Resistin (108 aa).

An N-terminal signal peptide occupies residues 1-18 (MKALCLLLLPVLGLLVSS). Disulfide bonds link Cys51-Cys104, Cys63-Cys103, Cys72-Cys89, Cys74-Cys91, and Cys78-Cys93.

The protein belongs to the resistin/FIZZ family. Homodimer; disulfide-linked. Interacts with DEFA1. Expressed in white adipose tissue (at protein level). Widely expressed, with particularly strong expression in lung, bone marrow, breast and peripheral blood. Expressed strongly in bone marrow and at lower levels in lung, but not detected in other tissues. Isoform 2 is detected in adipose tissue, bone marrow, brain, lung, peripheral blood, placenta and thymus.

It localises to the secreted. In terms of biological role, hormone that seems to suppress insulin ability to stimulate glucose uptake into adipose cells. Potentially links obesity to diabetes. Promotes chemotaxis in myeloid cells. This Homo sapiens (Human) protein is Resistin (RETN).